A 404-amino-acid chain; its full sequence is MEQNNSLFSRIINANLVLQIIFGIAAGIILATVSHDLAKSAATLGGLFVGALKAVAPILVFVLVASSIANQKKGSNTNMRPIISLYLIGTLLAALTAVTMSFAFPTTLVLVTGAEGAAPPQGIIEVLRTLVFKIVDNPINALRTANYIGILAWAIGLGIALHHASQNTKDVLSDMSHGVSFIVRFIIRLAPIGIFGLVANTIAETGFSALGGYASLLGVLLGSMAIVALVINPLMVFIKIRKNPYPLVFTCLRESGVTAFFTRSSAANIPVNMTLCEKLNIHEDSYSVSIPLGATINMAGAAITITVLTLAAVNTMGIQVDMFTALLLSVVAAISACGASGVAGGSLLLIPLACGLFGISNDVAMQVVGVGFIIGVIQDSAETGLNSSTDVLFTAACHRARERS.

The next 9 membrane-spanning stretches (helical) occupy residues 11–31 (IINA…IILA), 44–64 (LGGL…FVLV), 82–102 (IISL…TMSF), 144–164 (TANY…LHHA), 179–199 (VSFI…GLVA), 218–238 (GVLL…MVFI), 290–310 (IPLG…VLTL), 316–336 (MGIQ…AISA), and 363–383 (VAMQ…SAET).

It belongs to the dicarboxylate/amino acid:cation symporter (DAACS) (TC 2.A.23) family.

The protein resides in the cell inner membrane. The enzyme catalyses L-serine(in) + Na(+)(in) = L-serine(out) + Na(+)(out). The catalysed reaction is L-threonine(in) + Na(+)(in) = L-threonine(out) + Na(+)(out). In terms of biological role, involved in the import of serine and threonine into the cell, with the concomitant import of sodium (symport system). This is Serine/threonine transporter SstT from Desulfotalea psychrophila (strain LSv54 / DSM 12343).